Consider the following 473-residue polypeptide: Photosystem II CP43 reaction center protein (473 aa).

A propeptide spanning residues 1 to 14 (MKILYSQRRFYHVE) is cleaved from the precursor. Thr15 is subject to N-acetylthreonine. Thr15 carries the phosphothreonine modification. A run of 5 helical transmembrane segments spans residues 69-93 (LFEVAHFVPEKPMYEQGLILLPHLA), 134-155 (LIGPETLEESFPFFGYVWKDKN), 178-200 (KALYFGGIYDTWAPGGGDVRKIT), 255-275 (KPFAWARRALVWSGEAYLSYS), and 291-312 (WFNNTAYPSEFYGPTGPEASQA). [CaMn4O5] cluster is bound at residue Glu367. A helical membrane pass occupies residues 447-471 (RARAAAAGFEKGIDRDFEPVLSMTP).

Belongs to the PsbB/PsbC family. PsbC subfamily. PSII is composed of 1 copy each of membrane proteins PsbA, PsbB, PsbC, PsbD, PsbE, PsbF, PsbH, PsbI, PsbJ, PsbK, PsbL, PsbM, PsbT, PsbX, PsbY, PsbZ, Psb30/Ycf12, at least 3 peripheral proteins of the oxygen-evolving complex and a large number of cofactors. It forms dimeric complexes. Requires Binds multiple chlorophylls and provides some of the ligands for the Ca-4Mn-5O cluster of the oxygen-evolving complex. It may also provide a ligand for a Cl- that is required for oxygen evolution. PSII binds additional chlorophylls, carotenoids and specific lipids. as cofactor.

The protein resides in the plastid. It is found in the chloroplast thylakoid membrane. One of the components of the core complex of photosystem II (PSII). It binds chlorophyll and helps catalyze the primary light-induced photochemical processes of PSII. PSII is a light-driven water:plastoquinone oxidoreductase, using light energy to abstract electrons from H(2)O, generating O(2) and a proton gradient subsequently used for ATP formation. The chain is Photosystem II CP43 reaction center protein from Physcomitrium patens (Spreading-leaved earth moss).